The sequence spans 382 residues: Mannitol-1-phosphate 5-dehydrogenase (382 aa).

Residue Ala-3 to Gly-14 participates in NAD(+) binding.

It belongs to the mannitol dehydrogenase family.

It catalyses the reaction D-mannitol 1-phosphate + NAD(+) = beta-D-fructose 6-phosphate + NADH + H(+). In Tolumonas auensis (strain DSM 9187 / NBRC 110442 / TA 4), this protein is Mannitol-1-phosphate 5-dehydrogenase.